The chain runs to 554 residues: Phenylalanine--tRNA ligase beta subunit (554 aa).

A B5 domain is found at 276-351; sequence LSLKSRMISV…INYGYEKFEG (76 aa). The Mg(2+) site is built by D329, D335, E338, and E339.

The protein belongs to the phenylalanyl-tRNA synthetase beta subunit family. Type 2 subfamily. In terms of assembly, tetramer of two alpha and two beta subunits. It depends on Mg(2+) as a cofactor.

The protein resides in the cytoplasm. It catalyses the reaction tRNA(Phe) + L-phenylalanine + ATP = L-phenylalanyl-tRNA(Phe) + AMP + diphosphate + H(+). This chain is Phenylalanine--tRNA ligase beta subunit, found in Methanococcus maripaludis (strain C5 / ATCC BAA-1333).